The primary structure comprises 268 residues: Serine/arginine-rich splicing factor SR30 (268 aa).

RRM domains are found at residues 7 to 82 (RTIY…IAHG) and 109 to 187 (YRVL…EYES). The segment covering 186–199 (ESRSVSRSPDDSKS) has biased composition (basic and acidic residues). The interval 186 to 268 (ESRSVSRSPD…NSPVSPVISG (83 aa)) is disordered. Residues serine 193, serine 210, serine 212, serine 214, serine 219, serine 221, serine 227, serine 236, serine 246, serine 256, and serine 260 each carry the phosphoserine modification. Positions 207–247 (RGPSCSYSSKSRSVSPARSISPRSRPLSRSRSLYSSVSRSQ) are enriched in low complexity. The segment covering 257 to 268 (RSNSPVSPVISG) has biased composition (low complexity).

Belongs to the splicing factor SR family. SR subfamily. In terms of assembly, component of the spliceosome. Interacts with SNRNP35, CYP59 and CYP63. In terms of processing, phosphorylated. In terms of tissue distribution, ubiquitous.

Its subcellular location is the nucleus speckle. It is found in the nucleus. The protein localises to the nucleoplasm. It localises to the cytoplasm. Regulatory splicing factor that modulates alternative splicing and gene expression in specific cell types. Autoregulates its own expression. Probably involved in intron recognition and spliceosome assembly. This chain is Serine/arginine-rich splicing factor SR30 (SR30), found in Arabidopsis thaliana (Mouse-ear cress).